Reading from the N-terminus, the 225-residue chain is uncharacterized protein (225 aa).

In terms of domain architecture, PCI spans 166–214 (LNSDVIKDKILAIIENVGEITYEELAEKINIPEEDLEKYLSELKESGDI).

This is an uncharacterized protein from Methanocaldococcus jannaschii (strain ATCC 43067 / DSM 2661 / JAL-1 / JCM 10045 / NBRC 100440) (Methanococcus jannaschii).